Consider the following 377-residue polypeptide: Guanine nucleotide-binding protein subunit beta (377 aa).

WD repeat units lie at residues Gly63–Asn93, Leu105–Ser135, Gly154–Asp185, Gly202–Asp233, Gly246–Asp276, Gly292–Asp323, and Ser339–Ala369. Short sequence motifs (DWD box) lie at residues Phe220–Arg235 and Phe263–Arg278.

This sequence belongs to the WD repeat G protein beta family. G proteins are composed of 3 units, alpha, beta and gamma. Interacts with the gamma subunits GG1 and GG2. The dimers GB1-GG1 and GB1-GG2 interact with NDL1, NDL2 and NDL3. Interacts with WNK8. Interacts with XLG2. Interacts with RACK1A, RACK1B and RACK1C. Interacts with ZAR1 (via GBeta-binding domain). In terms of tissue distribution, expressed in seedlings (especially at the hypocotyl/root junction), roots, leaves (restricted to veins and guard cells), and flowers. Also present in hydathods. Expressed in guard cells, mesophyll tissue of cotyledons, trichomes and whole siliques, but not in seeds.

It localises to the cell membrane. The protein resides in the cytoplasm. Its subcellular location is the nucleus. Functionally, guanine nucleotide-binding proteins (G proteins) are involved as a modulator or transducer in various transmembrane signaling systems. The beta and gamma chains are required for the GTPase activity, for replacement of GDP by GTP, and for G protein-effector interaction. The heterotrimeric G-protein controls defense responses to necrotrophic and vascular fungi probably by modulating cell wall-related genes expression (e.g. lower xylose content in cell walls); involved in resistance to fungal pathogens such as Alternaria brassicicola and Fusarium oxysporum. Modulates root architecture (e.g. lateral root formation). Acts with XGL3 in the positive regulation of root waving and root skewing. Involved in the asymmetric division of zygote and specification of apical and basal cell lineages. This is Guanine nucleotide-binding protein subunit beta (GB1) from Arabidopsis thaliana (Mouse-ear cress).